The chain runs to 290 residues: 3-hydroxyacyl-thioester dehydratase Y (290 aa).

Positions 147-169 (FGGARGERPAAPEFPDRHPDARI) are disordered. Positions 151–169 (RGERPAAPEFPDRHPDARI) are enriched in basic and acidic residues. The MaoC-like domain maps to 161-271 (PDRHPDARID…AVFRTEVAGS (111 aa)).

This sequence belongs to the enoyl-CoA hydratase/isomerase family.

It carries out the reaction a (3R)-3-hydroxyacyl-CoA = a (2E)-enoyl-CoA + H2O. It catalyses the reaction (3R)-hydroxyhexanoyl-CoA = (2E)-hexenoyl-CoA + H2O. The catalysed reaction is (2E)-octenoyl-CoA + H2O = (3R)-hydroxyoctanoyl-CoA. The enzyme catalyses (3R)-3-hydroxydecanoyl-CoA = (2E)-decenoyl-CoA + H2O. It carries out the reaction (3R)-3-hydroxydodecanoyl-CoA = (2E)-dodecenoyl-CoA + H2O. It catalyses the reaction (3R)-hydroxyhexadecanoyl-CoA = (2E)-hexadecenoyl-CoA + H2O. In terms of biological role, shows trans-enoyl-CoA hydratase/3-hydroxyacyl-CoA dehydratase activity. In vitro, can hydrate various enoyl-CoA such as (2E)-hexenoyl-CoA, (2E)-octenoyl-CoA, (2E)-decenoyl-CoA, (2E)-dodecenoyl-CoA and (2E)-hexadecenoyl-CoA. May contribute to the persistence of the tuberculosis infection by inducing COX-2 expression in macrophages through MAPK-NF-kappaB signaling pathway. This chain is 3-hydroxyacyl-thioester dehydratase Y, found in Mycobacterium tuberculosis (strain ATCC 25618 / H37Rv).